A 103-amino-acid polypeptide reads, in one-letter code: Thioredoxin (103 aa).

Residues 1 to 103 (MVKEITDATF…ELDEVINKYV (103 aa)) enclose the Thioredoxin domain. Cysteines 28 and 31 form a disulfide.

Belongs to the thioredoxin family.

In terms of biological role, component of the thioredoxin-thioredoxin reductase system. Participates in various redox reactions through the reversible oxidation of its active center dithiol to a disulfide and catalyzes dithiol-disulfide exchange reactions. The polypeptide is Thioredoxin (trxA) (Listeria innocua serovar 6a (strain ATCC BAA-680 / CLIP 11262)).